The chain runs to 212 residues: Fibroblast growth factor 8b (212 aa).

An N-terminal signal peptide occupies residues M1–Q27. N-linked (GlcNAc...) asparagine glycosylation occurs at N139.

It belongs to the heparin-binding growth factors family.

Its subcellular location is the secreted. In terms of biological role, may act as signaling molecule during development of the midbrain-hindbrain boundary (MHB) organizer, and be involved in patterning of the nervous system. The chain is Fibroblast growth factor 8b (fgf8b) from Danio rerio (Zebrafish).